A 353-amino-acid chain; its full sequence is Photosystem II protein D1 (353 aa).

Residue Thr2 is modified to N-acetylthreonine. Residue Thr2 is modified to Phosphothreonine. Transmembrane regions (helical) follow at residues 29 to 46, 118 to 133, and 142 to 156; these read YIGWFGVLMIPTLLTATS, HFLLGVACYMGREWEL, and WIAVAYSAPVAAATA. His118 contributes to the chlorophyll a binding site. Tyr126 contributes to the pheophytin a binding site. Residues Asp170 and Glu189 each coordinate [CaMn4O5] cluster. A helical membrane pass occupies residues 197-218; it reads FHMLGVAGVFGGSLFSAMHGSL. His198 serves as a coordination point for chlorophyll a. A quinone is bound by residues His215 and 264–265; that span reads SF. His215 is a binding site for Fe cation. His272 lines the Fe cation pocket. The helical transmembrane segment at 274-288 threads the bilayer; it reads FLAAWPVVGIWFTAL. The [CaMn4O5] cluster site is built by His332, Glu333, Asp342, and Ala344. Positions 345-353 are excised as a propeptide; sequence AVEANSIDG.

Belongs to the reaction center PufL/M/PsbA/D family. As to quaternary structure, PSII is composed of 1 copy each of membrane proteins PsbA, PsbB, PsbC, PsbD, PsbE, PsbF, PsbH, PsbI, PsbJ, PsbK, PsbL, PsbM, PsbT, PsbX, PsbY, PsbZ, Psb30/Ycf12, at least 3 peripheral proteins of the oxygen-evolving complex and a large number of cofactors. It forms dimeric complexes. Requires The D1/D2 heterodimer binds P680, chlorophylls that are the primary electron donor of PSII, and subsequent electron acceptors. It shares a non-heme iron and each subunit binds pheophytin, quinone, additional chlorophylls, carotenoids and lipids. D1 provides most of the ligands for the Mn4-Ca-O5 cluster of the oxygen-evolving complex (OEC). There is also a Cl(-1) ion associated with D1 and D2, which is required for oxygen evolution. The PSII complex binds additional chlorophylls, carotenoids and specific lipids. as cofactor. Tyr-161 forms a radical intermediate that is referred to as redox-active TyrZ, YZ or Y-Z. In terms of processing, C-terminally processed by CTPA; processing is essential to allow assembly of the oxygen-evolving complex and thus photosynthetic growth.

It localises to the plastid. The protein resides in the chloroplast thylakoid membrane. It carries out the reaction 2 a plastoquinone + 4 hnu + 2 H2O = 2 a plastoquinol + O2. Functionally, photosystem II (PSII) is a light-driven water:plastoquinone oxidoreductase that uses light energy to abstract electrons from H(2)O, generating O(2) and a proton gradient subsequently used for ATP formation. It consists of a core antenna complex that captures photons, and an electron transfer chain that converts photonic excitation into a charge separation. The D1/D2 (PsbA/PsbD) reaction center heterodimer binds P680, the primary electron donor of PSII as well as several subsequent electron acceptors. This Cryptomeria japonica (Japanese cedar) protein is Photosystem II protein D1.